The chain runs to 186 residues: Ribosome-recycling factor (186 aa).

It belongs to the RRF family.

It is found in the cytoplasm. Responsible for the release of ribosomes from messenger RNA at the termination of protein biosynthesis. May increase the efficiency of translation by recycling ribosomes from one round of translation to another. The sequence is that of Ribosome-recycling factor from Paracidovorax citrulli (strain AAC00-1) (Acidovorax citrulli).